Consider the following 249-residue polypeptide: Probable transcriptional regulatory protein ERGA_CDS_03720 (249 aa).

The tract at residues 1–21 (MAGHSQFANIKHRKGAQDAKR) is disordered.

This sequence belongs to the TACO1 family.

It localises to the cytoplasm. The polypeptide is Probable transcriptional regulatory protein ERGA_CDS_03720 (Ehrlichia ruminantium (strain Gardel)).